We begin with the raw amino-acid sequence, 459 residues long: DNA damage-inducible protein F (459 aa).

12 helical membrane-spanning segments follow: residues 2–22 (PPGV…MAFL), 29–49 (LWHL…LGLV), 63–83 (LGGV…LLFL), 111–131 (LLLA…IIDL), 154–174 (WLSA…LGVQ), 180–200 (VILL…LVMG), 207–227 (GAAL…LLMV), 265–285 (LLQL…SDII), 289–309 (AVLM…AYAV), 338–358 (IVAL…IALL), 373–393 (IWQV…GMFI), and 416–436 (LLTL…VFLA).

This sequence belongs to the multi antimicrobial extrusion (MATE) (TC 2.A.66.1) family.

Its subcellular location is the cell inner membrane. In Escherichia coli (strain K12), this protein is DNA damage-inducible protein F (dinF).